The sequence spans 307 residues: Oxygen-dependent coproporphyrinogen-III oxidase (307 aa).

A substrate-binding site is contributed by Ser-97. The a divalent metal cation site is built by His-101 and His-111. His-111 serves as the catalytic Proton donor. Residue 113–115 (NVR) coordinates substrate. A divalent metal cation contacts are provided by His-152 and His-182. The important for dimerization stretch occupies residues 247–282 (YVEFNLVWDRGTHFGLQSGGRTESILMSMPPLASWS). Position 265 to 267 (265 to 267 (GGR)) interacts with substrate.

It belongs to the aerobic coproporphyrinogen-III oxidase family. In terms of assembly, homodimer. The cofactor is a divalent metal cation.

It localises to the cytoplasm. It catalyses the reaction coproporphyrinogen III + O2 + 2 H(+) = protoporphyrinogen IX + 2 CO2 + 2 H2O. Its pathway is porphyrin-containing compound metabolism; protoporphyrin-IX biosynthesis; protoporphyrinogen-IX from coproporphyrinogen-III (O2 route): step 1/1. In terms of biological role, involved in the heme biosynthesis. Catalyzes the aerobic oxidative decarboxylation of propionate groups of rings A and B of coproporphyrinogen-III to yield the vinyl groups in protoporphyrinogen-IX. This chain is Oxygen-dependent coproporphyrinogen-III oxidase, found in Polaromonas naphthalenivorans (strain CJ2).